We begin with the raw amino-acid sequence, 206 residues long: Ribosomal RNA large subunit methyltransferase E (206 aa).

S-adenosyl-L-methionine-binding residues include glycine 60, tryptophan 62, aspartate 80, aspartate 96, and aspartate 121. Residue lysine 161 is the Proton acceptor of the active site.

This sequence belongs to the class I-like SAM-binding methyltransferase superfamily. RNA methyltransferase RlmE family.

Its subcellular location is the cytoplasm. The catalysed reaction is uridine(2552) in 23S rRNA + S-adenosyl-L-methionine = 2'-O-methyluridine(2552) in 23S rRNA + S-adenosyl-L-homocysteine + H(+). Its function is as follows. Specifically methylates the uridine in position 2552 of 23S rRNA at the 2'-O position of the ribose in the fully assembled 50S ribosomal subunit. In Stutzerimonas stutzeri (strain A1501) (Pseudomonas stutzeri), this protein is Ribosomal RNA large subunit methyltransferase E.